The following is a 288-amino-acid chain: tRNA-cytidine(32) 2-sulfurtransferase (288 aa).

The PP-loop motif motif lies at 70 to 75; sequence SGGKDS. The [4Fe-4S] cluster site is built by C145, C148, and C236.

This sequence belongs to the TtcA family. Homodimer. The cofactor is Mg(2+). [4Fe-4S] cluster serves as cofactor.

It is found in the cytoplasm. The enzyme catalyses cytidine(32) in tRNA + S-sulfanyl-L-cysteinyl-[cysteine desulfurase] + AH2 + ATP = 2-thiocytidine(32) in tRNA + L-cysteinyl-[cysteine desulfurase] + A + AMP + diphosphate + H(+). It functions in the pathway tRNA modification. Its function is as follows. Catalyzes the ATP-dependent 2-thiolation of cytidine in position 32 of tRNA, to form 2-thiocytidine (s(2)C32). The sulfur atoms are provided by the cysteine/cysteine desulfurase (IscS) system. This is tRNA-cytidine(32) 2-sulfurtransferase from Bartonella tribocorum (strain CIP 105476 / IBS 506).